The primary structure comprises 267 residues: Dihydropteroate synthase (267 aa).

A Pterin-binding domain is found at 1-251; it reads MTKTKIMGIL…NVELNAKLAK (251 aa). Asn-11 lines the Mg(2+) pocket. (7,8-dihydropterin-6-yl)methyl diphosphate contacts are provided by residues Thr-51, Asp-84, Asn-103, Asp-167, Lys-203, and 239–241; that span reads RVH.

This sequence belongs to the DHPS family. As to quaternary structure, homodimer. Requires Mg(2+) as cofactor.

It catalyses the reaction (7,8-dihydropterin-6-yl)methyl diphosphate + 4-aminobenzoate = 7,8-dihydropteroate + diphosphate. Its pathway is cofactor biosynthesis; tetrahydrofolate biosynthesis; 7,8-dihydrofolate from 2-amino-4-hydroxy-6-hydroxymethyl-7,8-dihydropteridine diphosphate and 4-aminobenzoate: step 1/2. In terms of biological role, catalyzes the condensation of para-aminobenzoate (pABA) with 6-hydroxymethyl-7,8-dihydropterin diphosphate (DHPt-PP) to form 7,8-dihydropteroate (H2Pte), the immediate precursor of folate derivatives. This Staphylococcus aureus (strain MSSA476) protein is Dihydropteroate synthase (folP).